Here is a 242-residue protein sequence, read N- to C-terminus: UDP-2,3-diacylglucosamine hydrolase (242 aa).

Mn(2+)-binding residues include D9, H11, D42, N79, and H114. 79-80 (NR) lines the substrate pocket. Substrate is bound by residues D122, S160, N164, K167, and H195. Mn(2+) is bound by residues H195 and H197.

It belongs to the LpxH family. Requires Mn(2+) as cofactor.

It localises to the cell inner membrane. The catalysed reaction is UDP-2-N,3-O-bis[(3R)-3-hydroxytetradecanoyl]-alpha-D-glucosamine + H2O = 2-N,3-O-bis[(3R)-3-hydroxytetradecanoyl]-alpha-D-glucosaminyl 1-phosphate + UMP + 2 H(+). It participates in glycolipid biosynthesis; lipid IV(A) biosynthesis; lipid IV(A) from (3R)-3-hydroxytetradecanoyl-[acyl-carrier-protein] and UDP-N-acetyl-alpha-D-glucosamine: step 4/6. Hydrolyzes the pyrophosphate bond of UDP-2,3-diacylglucosamine to yield 2,3-diacylglucosamine 1-phosphate (lipid X) and UMP by catalyzing the attack of water at the alpha-P atom. Involved in the biosynthesis of lipid A, a phosphorylated glycolipid that anchors the lipopolysaccharide to the outer membrane of the cell. The sequence is that of UDP-2,3-diacylglucosamine hydrolase from Shewanella loihica (strain ATCC BAA-1088 / PV-4).